A 737-amino-acid polypeptide reads, in one-letter code: Probable serine/threonine-protein kinase DDB_G0269628 (737 aa).

A Protein kinase domain is found at 8–488 (YKLIKDLRSG…TLQKMDTSLL (481 aa)). ATP-binding positions include 14–22 (LRSGGEGKA) and lysine 36. Disordered stretches follow at residues 155 to 251 (NTIQ…KKCS) and 278 to 298 (TTAA…SSSN). A compositionally biased stretch (polar residues) spans 156-167 (TIQHSHSSSSLV). Residues 168-229 (NGTTSPTNAT…PSSPSSPLSP (62 aa)) are compositionally biased toward low complexity. The Proton acceptor role is filled by aspartate 349.

It belongs to the protein kinase superfamily. NEK Ser/Thr protein kinase family. NIMA subfamily.

The catalysed reaction is L-seryl-[protein] + ATP = O-phospho-L-seryl-[protein] + ADP + H(+). The enzyme catalyses L-threonyl-[protein] + ATP = O-phospho-L-threonyl-[protein] + ADP + H(+). In Dictyostelium discoideum (Social amoeba), this protein is Probable serine/threonine-protein kinase DDB_G0269628.